The chain runs to 182 residues: NADH-quinone oxidoreductase subunit B (182 aa).

Cysteine 47, cysteine 48, cysteine 113, and cysteine 142 together coordinate [4Fe-4S] cluster.

Belongs to the complex I 20 kDa subunit family. In terms of assembly, NDH-1 is composed of 14 different subunits. Subunits NuoB, C, D, E, F, and G constitute the peripheral sector of the complex. Requires [4Fe-4S] cluster as cofactor.

The protein resides in the cell inner membrane. It catalyses the reaction a quinone + NADH + 5 H(+)(in) = a quinol + NAD(+) + 4 H(+)(out). NDH-1 shuttles electrons from NADH, via FMN and iron-sulfur (Fe-S) centers, to quinones in the respiratory chain. The immediate electron acceptor for the enzyme in this species is believed to be ubiquinone. Couples the redox reaction to proton translocation (for every two electrons transferred, four hydrogen ions are translocated across the cytoplasmic membrane), and thus conserves the redox energy in a proton gradient. The chain is NADH-quinone oxidoreductase subunit B from Anaeromyxobacter dehalogenans (strain 2CP-1 / ATCC BAA-258).